The chain runs to 189 residues: Mediator of RNA polymerase II transcription subunit 10b (189 aa).

The interval 1 to 22 is disordered; it reads MDPTQNTSAGIGGSNGTIRYQT.

This sequence belongs to the Mediator complex subunit 10 family. As to quaternary structure, component of the Mediator complex.

It is found in the nucleus. In terms of biological role, component of the Mediator complex, a coactivator involved in the regulated transcription of nearly all RNA polymerase II-dependent genes. Mediator functions as a bridge to convey information from gene-specific regulatory proteins to the basal RNA polymerase II transcription machinery. The Mediator complex, having a compact conformation in its free form, is recruited to promoters by direct interactions with regulatory proteins and serves for the assembly of a functional preinitiation complex with RNA polymerase II and the general transcription factors. This chain is Mediator of RNA polymerase II transcription subunit 10b (MED10B), found in Arabidopsis thaliana (Mouse-ear cress).